We begin with the raw amino-acid sequence, 384 residues long: Iron(3+)-hydroxamate import system permease protein FhuB (384 aa).

Transmembrane regions (helical) follow at residues 58 to 78 (GAVIVLIAGLCLLCLGAFLSI), 115 to 135 (TAAAALVGALLAVSGAIMQGM), 154 to 174 (FAVSIAFAFFPGLSAMGLVLW), 176 to 196 (FAGAGLGASTVMGIGMFSRGG), 202 to 222 (LALAGTAVTYFFTGISTAIAI), 243 to 263 (WSGVQLLLIAGAVGLTLAFFI), 296 to 316 (VILTGAAVSIAGTIAFIGLII), 330 to 350 (WIIPCSAVLGAVLLVFADIAA), and 357 to 377 (FETPVGALTSLIGVPFFFYLA).

This sequence belongs to the binding-protein-dependent transport system permease family. FecCD subfamily. As to quaternary structure, the complex is composed of an ATP-binding protein (FhuC), two transmembrane proteins (FhuB and FhuG) and a solute-binding protein (FhuD or YxeB).

Its subcellular location is the cell membrane. It localises to the membrane raft. Part of the ABC transporter complex FhuBGCD involved in iron(3+)-hydroxamate import. Responsible for the translocation of the substrate across the membrane. The sequence is that of Iron(3+)-hydroxamate import system permease protein FhuB (fhuB) from Bacillus subtilis (strain 168).